The following is a 492-amino-acid chain: Steroid 21-hydroxylase (492 aa).

The heme b site is built by Arg-92 and Lys-121. 17alpha-hydroxyprogesterone is bound at residue Arg-232. Residue Arg-232 coordinates progesterone. Positions 364, 425, and 427 each coordinate heme b.

Belongs to the cytochrome P450 family. Heme b serves as cofactor.

Its subcellular location is the endoplasmic reticulum membrane. It is found in the microsome membrane. It carries out the reaction progesterone + reduced [NADPH--hemoprotein reductase] + O2 = 21-hydroxyprogesterone + oxidized [NADPH--hemoprotein reductase] + H2O + H(+). The enzyme catalyses 17alpha-hydroxyprogesterone + reduced [NADPH--hemoprotein reductase] + O2 = 11-deoxycortisol + oxidized [NADPH--hemoprotein reductase] + H2O + H(+). Functionally, a cytochrome P450 monooxygenase that plays a major role in adrenal steroidogenesis. Catalyzes the hydroxylation at C-21 of progesterone and 17alpha-hydroxyprogesterone to respectively form 11-deoxycorticosterone and 11-deoxycortisol, intermediate metabolites in the biosynthetic pathway of mineralocorticoids and glucocorticoids. Mechanistically, uses molecular oxygen inserting one oxygen atom into a substrate, and reducing the second into a water molecule, with two electrons provided by NADPH via cytochrome P450 reductase (CPR; NADPH-ferrihemoprotein reductase). The protein is Steroid 21-hydroxylase (CYP21) of Sus scrofa (Pig).